The sequence spans 280 residues: MSALNLTVRVHPVVLFQVVDAFERRNADSHRVIGTLLGSVDKGVVEVTNCFCVPHKEHDDQVEAELSYALDMYELNRKVNSNESVVGWWATGNEVTNHSSVIHEYYARECNNPVHVTVDTSLQGGRMGLRAYVCIQLGVPGGKSGCMFTPIPVELTSYEPETFGLKLLQKTVGVSPAHRPKTVPPMLDLAQISEASTKLQSLLDLILKYVDDVIAHKVTPDNAVGRQLLDLIHAVPHMTHEQFTQMFNANVRDLLMVITLSQLIKTQLQLNEKLTFLPTA.

In terms of domain architecture, MPN spans valine 8–glycine 138.

The protein belongs to the eIF-3 subunit F family. Component of the eukaryotic translation initiation factor 3 (eIF-3) complex. The eIF-3 complex interacts with pix.

The protein localises to the cytoplasm. Component of the eukaryotic translation initiation factor 3 (eIF-3) complex, which is involved in protein synthesis of a specialized repertoire of mRNAs and, together with other initiation factors, stimulates binding of mRNA and methionyl-tRNAi to the 40S ribosome. The eIF-3 complex specifically targets and initiates translation of a subset of mRNAs involved in cell proliferation. The chain is Eukaryotic translation initiation factor 3 subunit F-1 from Drosophila willistoni (Fruit fly).